We begin with the raw amino-acid sequence, 323 residues long: 3-dehydroquinate synthase (323 aa).

It belongs to the archaeal-type DHQ synthase family.

The enzyme catalyses 2-amino-2,3,7-trideoxy-D-lyxo-hept-6-ulosonate + NAD(+) + H2O = 3-dehydroquinate + NH4(+) + NADH + H(+). Functionally, catalyzes the oxidative deamination and cyclization of 2-amino-3,7-dideoxy-D-threo-hept-6-ulosonic acid (ADH) to yield 3-dehydroquinate (DHQ), which is fed into the canonical shikimic pathway of aromatic amino acid biosynthesis. This is 3-dehydroquinate synthase from Archaeoglobus fulgidus (strain ATCC 49558 / DSM 4304 / JCM 9628 / NBRC 100126 / VC-16).